Here is a 339-residue protein sequence, read N- to C-terminus: MTVRVGINGFGRIGRNFYRALLAQQEHGIADVQVVAINDITDNSTLAYLLKFDSILGRLPHDVSLEEEDTIVVGSEKIKALAVREGPAALPWHAFGVDVVVESTGLFTNAAKAKGHLEAGAKKVIVSAPATDPDITIVFGVNDDKYDGSQNIISNASCTTNCLAPLAKVLHDQFGIVKGLMTTVHAYTQDQNLQDGPHSDLRRARAAALNVVPTSTGAAKAIGLVMPELKGKLDGYALRVPIPTGSVTDLTADLSKCVSVNEINAVFQDAAEGRLKGILKYVDAPIVSSDIVTDPHSSIFDSGLTKVIASQAKVVSWYDNEWGYSNRLVDLVGLVGKSL.

Residues 12–13, aspartate 39, arginine 84, and serine 127 contribute to the NAD(+) site; that span reads RI. Residues 157–159, threonine 188, arginine 203, 216–217, and arginine 239 each bind D-glyceraldehyde 3-phosphate; these read SCT and TG. Residue cysteine 158 is the Nucleophile of the active site. An NAD(+)-binding site is contributed by asparagine 320.

Belongs to the glyceraldehyde-3-phosphate dehydrogenase family. As to quaternary structure, homotetramer.

Its subcellular location is the cytoplasm. The enzyme catalyses D-glyceraldehyde 3-phosphate + phosphate + NAD(+) = (2R)-3-phospho-glyceroyl phosphate + NADH + H(+). The protein operates within carbohydrate degradation; glycolysis; pyruvate from D-glyceraldehyde 3-phosphate: step 1/5. In terms of biological role, catalyzes the oxidative phosphorylation of glyceraldehyde 3-phosphate (G3P) to 1,3-bisphosphoglycerate (BPG) using the cofactor NAD. The first reaction step involves the formation of a hemiacetal intermediate between G3P and a cysteine residue, and this hemiacetal intermediate is then oxidized to a thioester, with concomitant reduction of NAD to NADH. The reduced NADH is then exchanged with the second NAD, and the thioester is attacked by a nucleophilic inorganic phosphate to produce BPG. This chain is Glyceraldehyde-3-phosphate dehydrogenase (gapA), found in Mycobacterium leprae (strain TN).